Reading from the N-terminus, the 200-residue chain is NAD(P)H-quinone oxidoreductase subunit 6, chloroplastic (200 aa).

Helical transmembrane passes span isoleucine 13 to serine 33, isoleucine 35 to alanine 55, alanine 64 to isoleucine 84, isoleucine 102 to serine 122, and leucine 156 to isoleucine 176.

Belongs to the complex I subunit 6 family. In terms of assembly, NDH is composed of at least 16 different subunits, 5 of which are encoded in the nucleus.

It localises to the plastid. The protein localises to the chloroplast thylakoid membrane. It carries out the reaction a plastoquinone + NADH + (n+1) H(+)(in) = a plastoquinol + NAD(+) + n H(+)(out). The enzyme catalyses a plastoquinone + NADPH + (n+1) H(+)(in) = a plastoquinol + NADP(+) + n H(+)(out). NDH shuttles electrons from NAD(P)H:plastoquinone, via FMN and iron-sulfur (Fe-S) centers, to quinones in the photosynthetic chain and possibly in a chloroplast respiratory chain. The immediate electron acceptor for the enzyme in this species is believed to be plastoquinone. Couples the redox reaction to proton translocation, and thus conserves the redox energy in a proton gradient. The chain is NAD(P)H-quinone oxidoreductase subunit 6, chloroplastic (ndhG) from Physcomitrium patens (Spreading-leaved earth moss).